A 159-amino-acid chain; its full sequence is Ecotin (159 aa).

A signal peptide spans 1 to 22; the sequence is MRPTPLSTILALTMAATAPAMA. Cys-68 and Cys-105 are oxidised to a cystine.

Belongs to the protease inhibitor I11 (ecotin) family. Homodimer.

The protein resides in the periplasm. In terms of biological role, general inhibitor of family S1 serine proteases. The protein is Ecotin of Pseudomonas putida (strain W619).